The following is an 837-amino-acid chain: Translation initiation factor IF-2 (837 aa).

Disordered stretches follow at residues 1 to 44 (MTEK…VRKS) and 62 to 251 (KAQE…TKPA). 2 stretches are compositionally biased toward basic and acidic residues: residues 62-102 (KAQE…EAKP) and 111-165 (ADPE…HNDS). Basic residues predominate over residues 189 to 205 (RENHIRTGKNKVTKAKK). Residues 206 to 229 (GGRDDNGSKDERSADRRNQKDMRG) show a composition bias toward basic and acidic residues. Residues 242–251 (TLQQAFTKPA) show a composition bias toward polar residues. The 170-residue stretch at 337–506 (QRAPVVTIMG…LLQSEVLELT (170 aa)) folds into the tr-type G domain. A G1 region spans residues 346 to 353 (GHVDHGKT). 346–353 (GHVDHGKT) is a GTP binding site. Residues 371–375 (GITQH) form a G2 region. The G3 stretch occupies residues 392 to 395 (DTPG). GTP is bound by residues 392 to 396 (DTPGH) and 446 to 449 (NKID). Residues 446–449 (NKID) form a G4 region. The tract at residues 482-484 (SAK) is G5.

The protein belongs to the TRAFAC class translation factor GTPase superfamily. Classic translation factor GTPase family. IF-2 subfamily.

The protein resides in the cytoplasm. Functionally, one of the essential components for the initiation of protein synthesis. Protects formylmethionyl-tRNA from spontaneous hydrolysis and promotes its binding to the 30S ribosomal subunits. Also involved in the hydrolysis of GTP during the formation of the 70S ribosomal complex. This chain is Translation initiation factor IF-2, found in Actinobacillus succinogenes (strain ATCC 55618 / DSM 22257 / CCUG 43843 / 130Z).